The primary structure comprises 212 residues: Ribosomal RNA small subunit methyltransferase G (212 aa).

S-adenosyl-L-methionine contacts are provided by residues Gly-80, Leu-85, 131–132, and Arg-146; that span reads VE.

It belongs to the methyltransferase superfamily. RNA methyltransferase RsmG family.

Its subcellular location is the cytoplasm. The enzyme catalyses guanosine(527) in 16S rRNA + S-adenosyl-L-methionine = N(7)-methylguanosine(527) in 16S rRNA + S-adenosyl-L-homocysteine. In terms of biological role, specifically methylates the N7 position of guanine in position 527 of 16S rRNA. This chain is Ribosomal RNA small subunit methyltransferase G, found in Azoarcus sp. (strain BH72).